Here is a 156-residue protein sequence, read N- to C-terminus: Small ribosomal subunit protein uS7 (156 aa).

It belongs to the universal ribosomal protein uS7 family. Part of the 30S ribosomal subunit. Contacts proteins S9 and S11.

Its function is as follows. One of the primary rRNA binding proteins, it binds directly to 16S rRNA where it nucleates assembly of the head domain of the 30S subunit. Is located at the subunit interface close to the decoding center, probably blocks exit of the E-site tRNA. In Shewanella denitrificans (strain OS217 / ATCC BAA-1090 / DSM 15013), this protein is Small ribosomal subunit protein uS7.